Reading from the N-terminus, the 365-residue chain is Phosphate acyltransferase (365 aa).

Belongs to the PlsX family. In terms of assembly, homodimer. Probably interacts with PlsY.

The protein resides in the cytoplasm. The catalysed reaction is a fatty acyl-[ACP] + phosphate = an acyl phosphate + holo-[ACP]. It functions in the pathway lipid metabolism; phospholipid metabolism. In terms of biological role, catalyzes the reversible formation of acyl-phosphate (acyl-PO(4)) from acyl-[acyl-carrier-protein] (acyl-ACP). This enzyme utilizes acyl-ACP as fatty acyl donor, but not acyl-CoA. The sequence is that of Phosphate acyltransferase from Picosynechococcus sp. (strain ATCC 27264 / PCC 7002 / PR-6) (Agmenellum quadruplicatum).